Consider the following 818-residue polypeptide: Rho GTPase-activating protein 44 (818 aa).

Positions 14-249 constitute a BAR domain; the sequence is QTVGRAEKTE…IKAQQEAWVE (236 aa). Positions 255-445 constitute a Rho-GAP domain; the sequence is KPLEEHLTIS…PIIQHADWFF (191 aa). 3 disordered regions span residues 467–493, 530–772, and 789–818; these read ANYSSMPSPDMDPADRRQPEQARRPLS, SSAG…SMST, and TLRLSPLEHMRRHSVTDKRDSEEESESTAL. Positions 479–489 are enriched in basic and acidic residues; the sequence is PADRRQPEQAR. A Phosphoserine modification is found at serine 493. The span at 563–579 shows a compositional bias: low complexity; that stretch reads QPLDSPAAPALSPSGLG. Residues 598–611 are compositionally biased toward polar residues; the sequence is GSAQKGSPGSSQGT. Composition is skewed to low complexity over residues 614-641 and 688-708; these read AGTQPGAQPGAQPGASPSPSQPPADQSP and SPYGLSYPQGYSLASGQLSPA. An interaction with BST2 region spans residues 731-818; it reads KPRQRPTLPP…SEEESESTAL (88 aa). Residues 746–757 are compositionally biased toward polar residues; sequence VNLSASSPQSTE. Positions 764–767 match the PDZ-binding motif; it reads MSPG. The span at 794 to 809 shows a compositional bias: basic and acidic residues; it reads PLEHMRRHSVTDKRDS. Serine 809 is modified (phosphoserine). The short motif at 815-818 is the PDZ-binding element; the sequence is STAL.

In terms of assembly, interacts with BST2 (via cytoplasmic domain). Interacts (probably via PDZ-binding motif) with SHANK3 (via PDZ domain); the interaction takes place in dendritic spines and promotes GRIA1 exocytosis. In terms of tissue distribution, highly expressed in brain. Expressed at weak level in other tissues.

The protein resides in the cell projection. It is found in the dendritic spine. It localises to the recycling endosome. Its subcellular location is the presynapse. The protein localises to the dendrite. In terms of biological role, GTPase-activating protein (GAP) that stimulates the GTPase activity of Rho-type GTPases. Thereby, controls Rho-type GTPases cycling between their active GTP-bound and inactive GDP-bound states. Acts as a GAP at least for CDC42 and RAC1. In neurons, is involved in dendritic spine formation and synaptic plasticity in a specific RAC1-GAP activity. Limits the initiation of exploratory dendritic filopodia. Recruited to actin-patches that seed filopodia, binds specifically to plasma membrane sections that are deformed inward by acto-myosin mediated contractile forces. Acts through GAP activity on RAC1 to reduce actin polymerization necessary for filopodia formation. In association with SHANK3, promotes GRIA1 exocytosis from recycling endosomes and spine morphological changes associated to long-term potentiation. The polypeptide is Rho GTPase-activating protein 44 (Homo sapiens (Human)).